Reading from the N-terminus, the 484-residue chain is D-aminoacylase (484 aa).

It belongs to the metallo-dependent hydrolases superfamily. N-acyl-D-amino-acid deacylase family. Zn(2+) serves as cofactor.

It localises to the cytoplasm. It catalyses the reaction an N-acyl-D-amino acid + H2O = a D-alpha-amino acid + a carboxylate. Functionally, has a wide specificity; hydrolyzes N-acyl derivative of neutral D-amino acids. In Alcaligenes xylosoxydans xylosoxydans (Achromobacter xylosoxidans), this protein is D-aminoacylase (dan).